The primary structure comprises 272 residues: Low-density lipoprotein receptor class A domain-containing protein 2 (272 aa).

An N-terminal signal peptide occupies residues 1–25 (MEACCLLQLPQRLLLLGAAALTATA). Residues 26–233 (LETADLAELC…GSTDAHTSRS (208 aa)) are Extracellular-facing. N97 carries N-linked (GlcNAc...) asparagine glycosylation. Positions 172–214 (PCGAYFRCQNGRCIPSSLVCDPWGMDNCGDGSDQGSWSPADCR) constitute an LDL-receptor class A domain. Cystine bridges form between C173/C184, C179/C199, and C191/C213. The disordered stretch occupies residues 202–272 (GSDQGSWSPA…QDAALEGSTE (71 aa)). The segment covering 220–236 (PSQTGSTDAHTSRSLTP) has biased composition (polar residues). The helical transmembrane segment at 234–250 (LTPSPALGSAGSLWIAA) threads the bilayer. Residues 251-272 (ERSSPAGRDPTRQDAALEGSTE) lie on the Cytoplasmic side of the membrane.

It belongs to the LDLR family.

The protein resides in the membrane. This chain is Low-density lipoprotein receptor class A domain-containing protein 2 (LDLRAD2), found in Homo sapiens (Human).